A 1188-amino-acid chain; its full sequence is Probable phosphoenolpyruvate synthase (1188 aa).

Residues 536–670 enclose the DOD-type homing endonuclease domain; that stretch reads LGGAVLSDGH…LIVGLYRLGI (135 aa). Residue His-824 is the Tele-phosphohistidine intermediate of the active site. Substrate contacts are provided by Arg-917, Arg-964, Glu-1061, Gly-1083, Thr-1084, Asn-1085, and Asp-1086. Glu-1061 contributes to the Mg(2+) binding site. Position 1086 (Asp-1086) interacts with Mg(2+). Cys-1133 acts as the Proton donor in catalysis.

It belongs to the PEP-utilizing enzyme family. Requires Mg(2+) as cofactor. Post-translationally, this protein undergoes a protein self splicing that involves a post-translational excision of the intervening region (intein) followed by peptide ligation.

The enzyme catalyses pyruvate + ATP + H2O = phosphoenolpyruvate + AMP + phosphate + 2 H(+). It functions in the pathway carbohydrate biosynthesis; gluconeogenesis. Catalyzes the phosphorylation of pyruvate to phosphoenolpyruvate. The polypeptide is Probable phosphoenolpyruvate synthase (ppsA) (Methanocaldococcus jannaschii (strain ATCC 43067 / DSM 2661 / JAL-1 / JCM 10045 / NBRC 100440) (Methanococcus jannaschii)).